The sequence spans 223 residues: Ribonuclease 3 (223 aa).

The RNase III domain maps to 5 to 127 (LQRLEKKIGY…IIGAIYLDSD (123 aa)). Glu40 is a binding site for Mg(2+). Residue Asp44 is part of the active site. Mg(2+) contacts are provided by Asp113 and Glu116. The active site involves Glu116. In terms of domain architecture, DRBM spans 154–223 (DPKTRLQEYL…AADIALGQLN (70 aa)).

This sequence belongs to the ribonuclease III family. As to quaternary structure, homodimer. The cofactor is Mg(2+).

It localises to the cytoplasm. It catalyses the reaction Endonucleolytic cleavage to 5'-phosphomonoester.. In terms of biological role, digests double-stranded RNA. Involved in the processing of primary rRNA transcript to yield the immediate precursors to the large and small rRNAs (23S and 16S). Processes some mRNAs, and tRNAs when they are encoded in the rRNA operon. Processes pre-crRNA and tracrRNA of type II CRISPR loci if present in the organism. This chain is Ribonuclease 3, found in Aliivibrio fischeri (strain ATCC 700601 / ES114) (Vibrio fischeri).